The primary structure comprises 515 residues: FAD-dependent oxidoreductase domain-containing protein 1 homolog (515 aa).

The segment at 18–37 (AGATSNGSGSSGGDKSGEDL) is disordered. A helical transmembrane segment spans residues 100–116 (VLIIGGGGVGSSIAYWL).

Associates with mitochondrial complex I assembly intermediates during its biogenesis. It depends on FAD as a cofactor.

It is found in the mitochondrion inner membrane. Its function is as follows. Involved in the assembly of the mitochondrial membrane respiratory chain NADH dehydrogenase (Complex I). The protein is FAD-dependent oxidoreductase domain-containing protein 1 homolog of Drosophila melanogaster (Fruit fly).